The sequence spans 96 residues: (4S)-4-hydroxy-5-phosphonooxypentane-2,3-dione isomerase (96 aa).

Residues 2 to 91 (HVTLVEINVH…MTGPRKKRLF (90 aa)) enclose the ABM domain.

The protein belongs to the LsrG family. As to quaternary structure, homodimer.

It is found in the cytoplasm. The catalysed reaction is (2S)-2-hydroxy-3,4-dioxopentyl phosphate = 3-hydroxy-2,4-dioxopentyl phosphate. In terms of biological role, involved in the degradation of phospho-AI-2, thereby terminating induction of the lsr operon and closing the AI-2 signaling cycle. Catalyzes the conversion of (4S)-4-hydroxy-5-phosphonooxypentane-2,3-dione (P-DPD) to 3-hydroxy-5-phosphonooxypentane-2,4-dione (P-HPD). This is (4S)-4-hydroxy-5-phosphonooxypentane-2,3-dione isomerase from Escherichia coli O9:H4 (strain HS).